Consider the following 92-residue polypeptide: Small ribosomal subunit protein uS19 (92 aa).

Belongs to the universal ribosomal protein uS19 family.

Protein S19 forms a complex with S13 that binds strongly to the 16S ribosomal RNA. In Rickettsia typhi (strain ATCC VR-144 / Wilmington), this protein is Small ribosomal subunit protein uS19.